Consider the following 318-residue polypeptide: NADH-ubiquinone oxidoreductase chain 1 (318 aa).

A run of 8 helical transmembrane segments spans residues Phe2–Leu22, Phe69–Leu89, Leu102–Ala122, Met146–Ala166, His171–Ala191, Leu222–Phe242, Glu253–Val273, and Leu294–Ile314.

The protein belongs to the complex I subunit 1 family.

It localises to the mitochondrion inner membrane. It carries out the reaction a ubiquinone + NADH + 5 H(+)(in) = a ubiquinol + NAD(+) + 4 H(+)(out). In terms of biological role, core subunit of the mitochondrial membrane respiratory chain NADH dehydrogenase (Complex I) that is believed to belong to the minimal assembly required for catalysis. Complex I functions in the transfer of electrons from NADH to the respiratory chain. The immediate electron acceptor for the enzyme is believed to be ubiquinone. The chain is NADH-ubiquinone oxidoreductase chain 1 (MT-ND1) from Loxodonta africana (African elephant).